A 502-amino-acid polypeptide reads, in one-letter code: Lysine--tRNA ligase (502 aa).

Residues glutamate 409 and glutamate 416 each coordinate Mg(2+).

This sequence belongs to the class-II aminoacyl-tRNA synthetase family. In terms of assembly, homodimer. It depends on Mg(2+) as a cofactor.

It localises to the cytoplasm. The catalysed reaction is tRNA(Lys) + L-lysine + ATP = L-lysyl-tRNA(Lys) + AMP + diphosphate. The sequence is that of Lysine--tRNA ligase from Prochlorococcus marinus (strain SARG / CCMP1375 / SS120).